The sequence spans 498 residues: uncharacterized protein (498 aa).

3 disordered regions span residues 1–48 (MSND…ARPK), 99–134 (NDLHPLDNDSTRTSKTLKNSSEVLTASKLTDEGNSK), and 190–209 (NSENSNVNNGSSLNGNTSSN). Polar residues predominate over residues 35–44 (ELSTPKQVNQ). Basic and acidic residues predominate over residues 99–110 (NDLHPLDNDSTR). Positions 111–126 (TSKTLKNSSEVLTASK) are enriched in polar residues.

This is an uncharacterized protein from Schizosaccharomyces pombe (strain 972 / ATCC 24843) (Fission yeast).